The primary structure comprises 369 residues: 2-aminoethylphosphonate--pyruvate transaminase (369 aa).

Position 193 is an N6-(pyridoxal phosphate)lysine (lysine 193).

It belongs to the class-V pyridoxal-phosphate-dependent aminotransferase family. PhnW subfamily. Homodimer. The cofactor is pyridoxal 5'-phosphate.

The catalysed reaction is (2-aminoethyl)phosphonate + pyruvate = phosphonoacetaldehyde + L-alanine. Its function is as follows. Involved in phosphonate degradation. The polypeptide is 2-aminoethylphosphonate--pyruvate transaminase (Burkholderia mallei (strain NCTC 10247)).